We begin with the raw amino-acid sequence, 316 residues long: MKWYEVRVSTTDEASDAVSEMLTTMGAGGVAIKDPFDIKKEILKPNSLDYADDEFLESLGEDVVIQAYFQSGNDIDKLLKQINEGLVNISQFLNIGKGLEGYNEVDDEDWSTAWKKYYKPLQLTDRIVIKPTWEDYSPNADEIVIQMDPGMAFGTGTHETTQMCSILLDKYMKDDTEVLDIGCGTGILSIIAAKLGAKQVEAIDIDEVAVKVARENIELNQEITKVSARKAVLSDLKAEEHKYDIIVANIIANVIIDLSSQIPYYLKKESLFITSGIIKERKQEVIDACEKNGMSRIETLEMGEWVAMVFKCPDTL.

S-adenosyl-L-methionine-binding residues include Thr-161, Gly-182, Asp-204, and Asn-249.

Belongs to the methyltransferase superfamily. PrmA family.

The protein resides in the cytoplasm. It catalyses the reaction L-lysyl-[protein] + 3 S-adenosyl-L-methionine = N(6),N(6),N(6)-trimethyl-L-lysyl-[protein] + 3 S-adenosyl-L-homocysteine + 3 H(+). Methylates ribosomal protein L11. The sequence is that of Ribosomal protein L11 methyltransferase from Ruminiclostridium cellulolyticum (strain ATCC 35319 / DSM 5812 / JCM 6584 / H10) (Clostridium cellulolyticum).